Consider the following 272-residue polypeptide: Universal stress protein MT2699 (272 aa).

ATP is bound by residues Gly15, 109–115 (GSVGIGR), and 123–124 (ST).

This sequence belongs to the universal stress protein A family.

This Mycobacterium tuberculosis (strain CDC 1551 / Oshkosh) protein is Universal stress protein MT2699.